Here is a 476-residue protein sequence, read N- to C-terminus: Bifunctional protein HldE (476 aa).

The interval 1–318 is ribokinase; that stretch reads MKVTLPDFRR…ENAIRGRAET (318 aa). 195-198 is an ATP binding site; sequence NLSE. Aspartate 264 is an active-site residue. Positions 344–476 are cytidylyltransferase; that stretch reads MTNGIFDILH…IIQSIKNGLG (133 aa).

This sequence in the N-terminal section; belongs to the carbohydrate kinase PfkB family. In the C-terminal section; belongs to the cytidylyltransferase family. Homodimer.

It carries out the reaction D-glycero-beta-D-manno-heptose 7-phosphate + ATP = D-glycero-beta-D-manno-heptose 1,7-bisphosphate + ADP + H(+). It catalyses the reaction D-glycero-beta-D-manno-heptose 1-phosphate + ATP + H(+) = ADP-D-glycero-beta-D-manno-heptose + diphosphate. It participates in nucleotide-sugar biosynthesis; ADP-L-glycero-beta-D-manno-heptose biosynthesis; ADP-L-glycero-beta-D-manno-heptose from D-glycero-beta-D-manno-heptose 7-phosphate: step 1/4. It functions in the pathway nucleotide-sugar biosynthesis; ADP-L-glycero-beta-D-manno-heptose biosynthesis; ADP-L-glycero-beta-D-manno-heptose from D-glycero-beta-D-manno-heptose 7-phosphate: step 3/4. In terms of biological role, catalyzes the phosphorylation of D-glycero-D-manno-heptose 7-phosphate at the C-1 position to selectively form D-glycero-beta-D-manno-heptose-1,7-bisphosphate. Functionally, catalyzes the ADP transfer from ATP to D-glycero-beta-D-manno-heptose 1-phosphate, yielding ADP-D-glycero-beta-D-manno-heptose. The polypeptide is Bifunctional protein HldE (Yersinia enterocolitica serotype O:8 / biotype 1B (strain NCTC 13174 / 8081)).